Reading from the N-terminus, the 541-residue chain is Tryptophan N-monooxygenase 1 (541 aa).

The chain crosses the membrane as a helical span at residues 21–41 (FSTLYLLSTLQAFVAITLVML). Residue C477 coordinates heme.

Belongs to the cytochrome P450 family. Heme serves as cofactor. As to expression, found in all tissues tested. Highest expression in roots, and low expression in stem.

It localises to the membrane. The enzyme catalyses L-tryptophan + 2 reduced [NADPH--hemoprotein reductase] + 2 O2 = (E)-(indol-3-yl)acetaldehyde oxime + 2 oxidized [NADPH--hemoprotein reductase] + CO2 + 3 H2O + 2 H(+). Its function is as follows. Converts tryptophan to indole-3-acetaldoxime, a precursor for tryptophan-derived glucosinolates and indole-3-acetic acid (IAA). Involved in the biosynthetic pathway to 4-hydroxyindole-3-carbonyl nitrile (4-OH-ICN), a cyanogenic metabolite required for inducible pathogen defense. This chain is Tryptophan N-monooxygenase 1 (CYP79B2), found in Arabidopsis thaliana (Mouse-ear cress).